The primary structure comprises 62 residues: Large ribosomal subunit protein bL35 (62 aa).

A disordered region spans residues 31-62 (HLAQNKTTKQKRQSRKSAQMHSSDLKRFKALI). Residues 53 to 62 (SDLKRFKALI) are compositionally biased toward basic and acidic residues.

The protein belongs to the bacterial ribosomal protein bL35 family.

This chain is Large ribosomal subunit protein bL35, found in Mycoplasmopsis agalactiae (strain NCTC 10123 / CIP 59.7 / PG2) (Mycoplasma agalactiae).